Consider the following 880-residue polypeptide: Alanine--tRNA ligase (880 aa).

Positions 571, 575, 673, and 677 each coordinate Zn(2+).

It belongs to the class-II aminoacyl-tRNA synthetase family. Requires Zn(2+) as cofactor.

It localises to the cytoplasm. It catalyses the reaction tRNA(Ala) + L-alanine + ATP = L-alanyl-tRNA(Ala) + AMP + diphosphate. Its function is as follows. Catalyzes the attachment of alanine to tRNA(Ala) in a two-step reaction: alanine is first activated by ATP to form Ala-AMP and then transferred to the acceptor end of tRNA(Ala). Also edits incorrectly charged Ser-tRNA(Ala) and Gly-tRNA(Ala) via its editing domain. The chain is Alanine--tRNA ligase from Oleidesulfovibrio alaskensis (strain ATCC BAA-1058 / DSM 17464 / G20) (Desulfovibrio alaskensis).